We begin with the raw amino-acid sequence, 426 residues long: Mothers against decapentaplegic homolog 7 (426 aa).

The interval 14–42 is disordered; the sequence is WRSRAPGGEDEEEGVGGGGGGGELRGEGA. N6-acetyllysine; alternate occurs at positions 64 and 70. Glycyl lysine isopeptide (Lys-Gly) (interchain with G-Cter in ubiquitin); alternate cross-links involve residues K64 and K70. The MH1 domain occupies 64–207; the sequence is KAVRGAKGHH…LSRLCELESP (144 aa). Over residues 67–76 the composition is skewed to basic residues; the sequence is RGAKGHHHPH. The tract at residues 67–87 is disordered; it reads RGAKGHHHPHPPTSGAGAAGG. C125, C180, C192, and H197 together coordinate Zn(2+). A PY-motif motif is present at residues 208-211; that stretch reads PPPY. An important for interaction with SMURF2 region spans residues 208–217; it reads PPPYSRYPMD. The residue at position 249 (S249) is a Phosphoserine. The MH2 domain maps to 261–426; that stretch reads WCVVAYWEEK…CWLEVIFNSR (166 aa).

Belongs to the dwarfin/SMAD family. Interacts with COPS5. Interacts with STAMBP. Interacts with PPP1R15A. Interacts with NEDD4L. Interacts with RNF111, AXIN1 and AXIN2. Interacts with ACVR1B, SMURF1, SMURF2 and TGFBR1; SMAD7 recruits SMURF1 and SMURF2 to the TGF-beta receptor and regulates its degradation. Interacts with WWP1. Interacts with PDPK1 (via PH domain). Ubiquitinated by WWP1. Interacts with TSC22D1/TSC-22; the interaction requires TGF-beta and the interaction is inhibited by TGFBR1. In terms of processing, phosphorylation on Ser-249 does not affect its stability, nuclear localization or inhibitory function in TGFB signaling; however it affects its ability to regulate transcription. Phosphorylated by PDPK1. Post-translationally, ubiquitinated by WWP1. Polyubiquitinated by RNF111, which is enhanced by AXIN1 and promotes proteasomal degradation. In response to TGF-beta, ubiquitinated by SMURF1; which promotes its degradation. Ubiquitinated by ARK2C, promoting proteasomal degradation, leading to enhance the BMP-Smad signaling. Acetylation prevents ubiquitination and degradation mediated by SMURF1. As to expression, ubiquitous in various organs, with higher levels in brain and kidney.

The protein localises to the nucleus. It localises to the cytoplasm. Antagonist of signaling by TGF-beta (transforming growth factor) type 1 receptor superfamily members; has been shown to inhibit TGF-beta (Transforming growth factor) and activin signaling by associating with their receptors thus preventing SMAD2 access. Functions as an adapter to recruit SMURF2 to the TGF-beta receptor complex. Also acts by recruiting the PPP1R15A-PP1 complex to TGFBR1, which promotes its dephosphorylation. Positively regulates PDPK1 kinase activity by stimulating its dissociation from the 14-3-3 protein YWHAQ which acts as a negative regulator. The sequence is that of Mothers against decapentaplegic homolog 7 (Smad7) from Mus musculus (Mouse).